Reading from the N-terminus, the 258-residue chain is Imidazole glycerol phosphate synthase subunit HisF (258 aa).

Catalysis depends on residues aspartate 11 and aspartate 130.

This sequence belongs to the HisA/HisF family. In terms of assembly, heterodimer of HisH and HisF.

Its subcellular location is the cytoplasm. The enzyme catalyses 5-[(5-phospho-1-deoxy-D-ribulos-1-ylimino)methylamino]-1-(5-phospho-beta-D-ribosyl)imidazole-4-carboxamide + L-glutamine = D-erythro-1-(imidazol-4-yl)glycerol 3-phosphate + 5-amino-1-(5-phospho-beta-D-ribosyl)imidazole-4-carboxamide + L-glutamate + H(+). The protein operates within amino-acid biosynthesis; L-histidine biosynthesis; L-histidine from 5-phospho-alpha-D-ribose 1-diphosphate: step 5/9. In terms of biological role, IGPS catalyzes the conversion of PRFAR and glutamine to IGP, AICAR and glutamate. The HisF subunit catalyzes the cyclization activity that produces IGP and AICAR from PRFAR using the ammonia provided by the HisH subunit. In Xanthomonas oryzae pv. oryzae (strain MAFF 311018), this protein is Imidazole glycerol phosphate synthase subunit HisF.